Here is a 296-residue protein sequence, read N- to C-terminus: MEQFRNIGIIGRLGSSQVLDTIRRLKKFLLDRHLHVILEDTIAEVLPGHGLQTSTRKLLGEVCDLVIVVGGDGSLLGAARALARHNIPVLGINRGNLGFLTDIRPDELEEKVAQVLDGHYLVENRFLLQAEVRRHHEAIGQGDALNDVVLHPGKSTRMIEFEIYIDGQFVCSQKADGLIVATPTGSTAYALSAGGPIMHPKLDAIVIVPMYPHTLSGRPIVVDGNSELKIVVSKDLQIYPQVSCDGQNHFTCAPGDTITVSKKPQKLRLIHPLDHNYYEVCRTKLGWGSRLGSRDD.

Residue D72 is the Proton acceptor of the active site. NAD(+)-binding positions include 72–73 (DG), 146–147 (ND), R157, K174, D176, 187–192 (TAYALS), and Q247.

The protein belongs to the NAD kinase family. Requires a divalent metal cation as cofactor.

It localises to the cytoplasm. It carries out the reaction NAD(+) + ATP = ADP + NADP(+) + H(+). In terms of biological role, involved in the regulation of the intracellular balance of NAD and NADP, and is a key enzyme in the biosynthesis of NADP. Catalyzes specifically the phosphorylation on 2'-hydroxyl of the adenosine moiety of NAD to yield NADP. This chain is NAD kinase, found in Pseudomonas putida (strain GB-1).